A 146-amino-acid polypeptide reads, in one-letter code: Hemoglobin subunit beta (146 aa).

At Val-1 the chain carries N-acetylvaline. In terms of domain architecture, Globin spans His-2–His-146. At Thr-12 the chain carries Phosphothreonine. At Ser-44 the chain carries Phosphoserine. Lys-59 is subject to N6-acetyllysine. His-63 is a binding site for heme b. The residue at position 82 (Lys-82) is an N6-acetyllysine. His-92 lines the heme b pocket. At Cys-93 the chain carries S-nitrosocysteine. An N6-acetyllysine modification is found at Lys-144.

This sequence belongs to the globin family. In terms of assembly, heterotetramer of two alpha chains and two beta chains. In terms of tissue distribution, red blood cells.

Functionally, involved in oxygen transport from the lung to the various peripheral tissues. The sequence is that of Hemoglobin subunit beta (HBB) from Martes foina (Beech marten).